Consider the following 108-residue polypeptide: Integration host factor subunit alpha (108 aa).

It belongs to the bacterial histone-like protein family. As to quaternary structure, heterodimer of an alpha and a beta chain.

Functionally, this protein is one of the two subunits of integration host factor, a specific DNA-binding protein that functions in genetic recombination as well as in transcriptional and translational control. This chain is Integration host factor subunit alpha, found in Methylorubrum populi (strain ATCC BAA-705 / NCIMB 13946 / BJ001) (Methylobacterium populi).